The primary structure comprises 171 residues: MEKRLQEAQVYKEEGNQRYREGKYRDAVSRYHRALLQLRGLDPSLPSPLSSLGPQGPALTPEQENILHTIQTHCYNNLAACLLQMEPVNYERVREYSQKVLERQPDNAKALYRAGVAFFHLQDYDRARHHLLAAVNRQPKDANVRRYLQLTQSELSSYHRKEKQLYLGMFG.

TPR repeat units follow at residues 8 to 41, 72 to 107, and 108 to 141; these read AQVY…LRGL, THCY…QPDN, and AKAL…QPKD.

This sequence belongs to the TTC9 family.

The protein is Tetratricopeptide repeat protein 9C (Ttc9c) of Mus musculus (Mouse).